A 211-amino-acid polypeptide reads, in one-letter code: Flagellar calcium-binding protein (211 aa).

The disordered stretch occupies residues 1–29; sequence MGACGSKGSTSDKGLASDKDGKKAKDRKE. Basic and acidic residues predominate over residues 15–29; the sequence is LASDKDGKKAKDRKE. 4 EF-hand domains span residues 45 to 80, 81 to 116, 127 to 162, and 164 to 199; these read EAKQ…VLKL, DEFT…FVEF, YDFF…LEAW, and AKVE…VKLD. Ca(2+) contacts are provided by D58, N60, T62, K64, and E69. Ca(2+)-binding residues include D140, S142, N144, E151, D177, N179, T181, S183, and E188.

It belongs to the calflagin family.

Its subcellular location is the cell projection. The protein resides in the cilium. The protein localises to the flagellum. May contribute to the rapid motility of the trypanosomes, playing a role either in flagellar structure or in calcium metabolism. Could alternate between a GDP-bound inactive form to a calcium/GTP-bound active form. The polypeptide is Flagellar calcium-binding protein (FCABP) (Trypanosoma cruzi).